The chain runs to 624 residues: Leucine-rich repeat, immunoglobulin-like domain and transmembrane domain-containing protein 1 (624 aa).

The signal sequence occupies residues M1–G21. The region spanning F22 to P59 is the LRRNT domain. Residues F22–R527 are Lumenal-facing. LRR repeat units lie at residues D60–P81, R84–G105, R108–D129, Q132–F153, and N156–V177. A glycan (N-linked (GlcNAc...) asparagine) is linked at N156. Residues N201–S254 enclose the LRRCT domain. One can recognise an Ig-like C2-type domain in the interval P267 to G336. C276 and C329 form a disulfide bridge. N-linked (GlcNAc...) asparagine glycans are attached at residues N297 and N456. In terms of domain architecture, Fibronectin type-III spans M431 to V519. The LRR 6 repeat unit spans residues Q526 to C549. The chain crosses the membrane as a helical span at residues L528–V548. The Cytoplasmic portion of the chain corresponds to C549–C624.

As to quaternary structure, may form a homodimer. Interacts with LRIT2; may form a heterodimer with LRIT2. Interacts (via its N-terminal extracellular domain) with metabotropic glutamate receptor GRM6. Interacts (via its extreme C-terminus) with the scaffold protein FRMPD2 (via the third PDZ domain); the interaction leads to their colocalization in photoreceptor synapses. In terms of tissue distribution, expressed predominantly in developing photoreceptor and bipolar cells.

It localises to the endoplasmic reticulum membrane. Its subcellular location is the cell projection. It is found in the dendrite. In terms of biological role, photoreceptor synaptic protein essential for normal vision. Involved in synapse formation in cone photoreceptor cells. This Mus musculus (Mouse) protein is Leucine-rich repeat, immunoglobulin-like domain and transmembrane domain-containing protein 1 (Lrit1).